The sequence spans 71 residues: Beta-defensin 2 (71 aa).

A signal peptide spans 1–20 (MRTLCSLLLICCLLFSYTTP). Cystine bridges form between C37/C66, C44/C59, and C49/C67.

The protein belongs to the beta-defensin family. In terms of tissue distribution, kidney, uterus and to a lesser extent in heart.

The protein localises to the secreted. In terms of biological role, has bactericidal activity. The chain is Beta-defensin 2 (Defb2) from Mus musculus (Mouse).